Reading from the N-terminus, the 277-residue chain is 3-methyl-2-oxobutanoate hydroxymethyltransferase (277 aa).

Positions 53 and 96 each coordinate Mg(2+). Residues 53-54 (DS), Asp-96, and Lys-126 contribute to the 3-methyl-2-oxobutanoate site. Residue Glu-128 participates in Mg(2+) binding. Catalysis depends on Glu-195, which acts as the Proton acceptor.

Belongs to the PanB family. Homodecamer; pentamer of dimers. The cofactor is Mg(2+).

It is found in the cytoplasm. It catalyses the reaction 3-methyl-2-oxobutanoate + (6R)-5,10-methylene-5,6,7,8-tetrahydrofolate + H2O = 2-dehydropantoate + (6S)-5,6,7,8-tetrahydrofolate. It participates in cofactor biosynthesis; (R)-pantothenate biosynthesis; (R)-pantoate from 3-methyl-2-oxobutanoate: step 1/2. In terms of biological role, catalyzes the reversible reaction in which hydroxymethyl group from 5,10-methylenetetrahydrofolate is transferred onto alpha-ketoisovalerate to form ketopantoate. The polypeptide is 3-methyl-2-oxobutanoate hydroxymethyltransferase (Chlorobaculum parvum (strain DSM 263 / NCIMB 8327) (Chlorobium vibrioforme subsp. thiosulfatophilum)).